We begin with the raw amino-acid sequence, 487 residues long: 3-octaprenyl-4-hydroxybenzoate carboxy-lyase (487 aa).

Asn172 contributes to the Mn(2+) binding site. Prenylated FMN-binding positions include 175–177 (IYR), 189–191 (RWL), and 194–195 (RG). Glu238 contributes to the Mn(2+) binding site. Asp287 acts as the Proton donor in catalysis.

This sequence belongs to the UbiD family. As to quaternary structure, homohexamer. Requires prenylated FMN as cofactor. Mn(2+) is required as a cofactor.

The protein localises to the cell membrane. The catalysed reaction is a 4-hydroxy-3-(all-trans-polyprenyl)benzoate + H(+) = a 2-(all-trans-polyprenyl)phenol + CO2. Its pathway is cofactor biosynthesis; ubiquinone biosynthesis. Functionally, catalyzes the decarboxylation of 3-octaprenyl-4-hydroxy benzoate to 2-octaprenylphenol, an intermediate step in ubiquinone biosynthesis. This chain is 3-octaprenyl-4-hydroxybenzoate carboxy-lyase, found in Thiobacillus denitrificans (strain ATCC 25259 / T1).